The primary structure comprises 247 residues: MNESTVYECLKYGNENINRALEVLRAGKMIQIYDSDSREGETDLVIPAKAVTYKDVKWMRKDAGGLICVAVDPVASKQLKLPFMADLVREASRTSESLGEVVEKDGDLKYDSHSSFSIWVNHRDTRTGIPDLERALTIRKIGEITEKSLSGNGIRFGNEFRTPGHVALLRAAEGLLDERMGQTELSVALARMAGITPAMVVCEMLDDESGRALSKENSKDYGKDHGLVFLEGQEILEAYMLWTGSEC.

D-ribulose 5-phosphate-binding positions include arginine 38–glutamate 39, aspartate 43, arginine 179–threonine 183, and glutamate 203. Glutamate 39 is a binding site for Mg(2+).

This sequence belongs to the DHBP synthase family. As to quaternary structure, homodimer. Mg(2+) serves as cofactor. Requires Mn(2+) as cofactor.

The enzyme catalyses D-ribulose 5-phosphate = (2S)-2-hydroxy-3-oxobutyl phosphate + formate + H(+). It participates in cofactor biosynthesis; riboflavin biosynthesis; 2-hydroxy-3-oxobutyl phosphate from D-ribulose 5-phosphate: step 1/1. Functionally, catalyzes the conversion of D-ribulose 5-phosphate to formate and 3,4-dihydroxy-2-butanone 4-phosphate. This Methanosarcina acetivorans (strain ATCC 35395 / DSM 2834 / JCM 12185 / C2A) protein is 3,4-dihydroxy-2-butanone 4-phosphate synthase.